The primary structure comprises 319 residues: Ribonuclease Z (319 aa).

Zn(2+) is bound by residues His-62, His-64, Asp-66, His-67, His-139, Asp-209, and His-268. Asp-66 functions as the Proton acceptor in the catalytic mechanism.

This sequence belongs to the RNase Z family. In terms of assembly, homodimer. Zn(2+) serves as cofactor.

The enzyme catalyses Endonucleolytic cleavage of RNA, removing extra 3' nucleotides from tRNA precursor, generating 3' termini of tRNAs. A 3'-hydroxy group is left at the tRNA terminus and a 5'-phosphoryl group is left at the trailer molecule.. Its function is as follows. Zinc phosphodiesterase, which displays some tRNA 3'-processing endonuclease activity. Probably involved in tRNA maturation, by removing a 3'-trailer from precursor tRNA. The sequence is that of Ribonuclease Z from Pseudomonas putida (strain ATCC 47054 / DSM 6125 / CFBP 8728 / NCIMB 11950 / KT2440).